The chain runs to 489 residues: EGF-like domain-containing protein 2 (489 aa).

A signal peptide spans methionine 1–alanine 23. The 37-residue stretch at proline 73–glutamate 109 folds into the EGF-like domain. 3 disulfides stabilise this stretch: cysteine 77–cysteine 87, cysteine 81–cysteine 97, and cysteine 99–cysteine 108. Residues glutamate 116–alanine 370 form the ZP domain. Asparagine 229 carries N-linked (GlcNAc...) asparagine glycosylation. 2 disordered regions span residues cysteine 358–aspartate 389 and arginine 404–aspartate 425. Positions cysteine 363–proline 374 are enriched in pro residues. Basic and acidic residues predominate over residues arginine 404–serine 420. N-linked (GlcNAc...) asparagine glycosylation is found at asparagine 414 and asparagine 479.

In terms of tissue distribution, component of the acid-insoluble organic matrix of calcified layers of the shell (at protein level).

It localises to the secreted. This Lottia gigantea (Giant owl limpet) protein is EGF-like domain-containing protein 2.